The sequence spans 188 residues: dCTP deaminase (188 aa).

Residues 111 to 116, 135 to 137, Q156, Y170, and Q180 each bind dCTP; these read KSTYAR and TLE. The Proton donor/acceptor role is filled by E137.

This sequence belongs to the dCTP deaminase family. Homotrimer.

It catalyses the reaction dCTP + H2O + H(+) = dUTP + NH4(+). Its pathway is pyrimidine metabolism; dUMP biosynthesis; dUMP from dCTP (dUTP route): step 1/2. Functionally, catalyzes the deamination of dCTP to dUTP. The protein is dCTP deaminase of Ectopseudomonas mendocina (strain ymp) (Pseudomonas mendocina).